The following is a 484-amino-acid chain: MLIFELSKTGRQAKAQIPRAVGKNYSIPEEFQRKSPPRLPACSELQVVRHFTCLSQKNFSIDTNFYPLGSCTMKYNPRGVHKAASLPGFINRHPLAMDNESQGFLETLYKLQNYISEITGMPGVSLTPMAGSQGEFAGVAMIKAYHQSRGDTARDEILIPDAAHGTNPASAVMCGFKVVEIATAPDGDIDLDELKRKVGPRTAGIMLTNPSTLGLFMRQIKEIASLVHQAGGLLYYDGANLNAILGKVRPGDMGFDVMHLNLHKTFATPHGGGGPGAGPVAVGKRLIPYMPLPVVKKTDSGYHWATRQDYPQSIGRLSCFMGNAGILLRAYFYMLVLGKEGLLRVSEFATLNANYLLKELTKVGYTAAYPDRRASHEFILTLNSEKKNYDVTAMDFAKRLLDYGVHAPTTYFPLLVPECLLIEPPETESKEELDAFVAVMKTIREEASKQPDILKTAPHTLPVKRLDDVKAARELDLNYFATHE.

Lysine 264 carries the post-translational modification N6-(pyridoxal phosphate)lysine.

This sequence belongs to the GcvP family. C-terminal subunit subfamily. The glycine cleavage system is composed of four proteins: P, T, L and H. In this organism, the P 'protein' is a heterodimer of two subunits. It depends on pyridoxal 5'-phosphate as a cofactor.

It carries out the reaction N(6)-[(R)-lipoyl]-L-lysyl-[glycine-cleavage complex H protein] + glycine + H(+) = N(6)-[(R)-S(8)-aminomethyldihydrolipoyl]-L-lysyl-[glycine-cleavage complex H protein] + CO2. Functionally, the glycine cleavage system catalyzes the degradation of glycine. The P protein binds the alpha-amino group of glycine through its pyridoxal phosphate cofactor; CO(2) is released and the remaining methylamine moiety is then transferred to the lipoamide cofactor of the H protein. This is Probable glycine dehydrogenase (decarboxylating) subunit 2 from Legionella pneumophila (strain Corby).